The chain runs to 826 residues: Protein FAM171B (826 aa).

An N-terminal signal peptide occupies residues 1–32; sequence MARLCRRVPCTLLLGLAVVLLKARLVPAAARA. Residues 33 to 353 lie on the Extracellular side of the membrane; it reads ELSRSDLSLI…DSKDITAYHT (321 aa). A disordered region spans residues 52-71; the sequence is QQQQQKQLEEAEEERTEVPG. Residues asparagine 108, asparagine 113, asparagine 213, and asparagine 268 are each glycosylated (N-linked (GlcNAc...) asparagine). Residues 354–374 traverse the membrane as a helical segment; it reads VFLTAILGGTIVIVIGFFAVL. Topologically, residues 375 to 826 are cytoplasmic; the sequence is LCYCRDKCGT…REERPLIPIN (452 aa). 3 disordered regions span residues 429-448, 474-493, and 774-826; these read NAKNSSYSPQKKEPSKAETE, QNNYSRNPTQSLEPNVGSKQ, and HPGE…IPIN. The segment covering 438 to 448 has biased composition (basic and acidic residues); that stretch reads QKKEPSKAETE. The segment covering 474–486 has biased composition (polar residues); sequence QNNYSRNPTQSLE. Residues 774-786 are compositionally biased toward basic and acidic residues; it reads HPGEESPGRKSTV. Serine 794 carries the post-translational modification Phosphoserine. Positions 805-826 are enriched in basic and acidic residues; the sequence is AKRDSKTNIWKKREERPLIPIN.

This sequence belongs to the FAM171 family.

The protein localises to the cytoplasmic granule. The protein resides in the membrane. This chain is Protein FAM171B (FAM171B), found in Homo sapiens (Human).